The chain runs to 122 residues: Large ribosomal subunit protein uL14 (122 aa).

This sequence belongs to the universal ribosomal protein uL14 family. As to quaternary structure, part of the 50S ribosomal subunit. Forms a cluster with proteins L3 and L19. In the 70S ribosome, L14 and L19 interact and together make contacts with the 16S rRNA in bridges B5 and B8.

Binds to 23S rRNA. Forms part of two intersubunit bridges in the 70S ribosome. The protein is Large ribosomal subunit protein uL14 of Desulforapulum autotrophicum (strain ATCC 43914 / DSM 3382 / VKM B-1955 / HRM2) (Desulfobacterium autotrophicum).